The chain runs to 152 residues: Deoxyuridine 5'-triphosphate nucleotidohydrolase (152 aa).

Substrate-binding positions include 72-74 (RSG), Asn-85, and 89-91 (TID).

It belongs to the dUTPase family. It depends on Mg(2+) as a cofactor.

It catalyses the reaction dUTP + H2O = dUMP + diphosphate + H(+). It functions in the pathway pyrimidine metabolism; dUMP biosynthesis; dUMP from dCTP (dUTP route): step 2/2. Its function is as follows. This enzyme is involved in nucleotide metabolism: it produces dUMP, the immediate precursor of thymidine nucleotides and it decreases the intracellular concentration of dUTP so that uracil cannot be incorporated into DNA. In Rhodopseudomonas palustris (strain BisB18), this protein is Deoxyuridine 5'-triphosphate nucleotidohydrolase.